The chain runs to 466 residues: MTHDGTWSDESDWEAVEFELDEAAHAPPAPVVAVVGRPNVGKSTLVNRILGRREAVVQDVPGVTRDRVSYDALWTGRRFVVQDTGGWEPDAKGLQQLVAEQASVAMRTADAVILVVDALVGATTADEAAARILLRSGKPVFLAANKVDSDKAEADAAMLWSLGLGEPHPISAMHGRGVADLLDEVLAALPEVSEVAPRPGGPRRVALVGKPNVGKSSLLNKLAGDQRSVVHDVAGTTVDPVDSLIELGDRVWRFVDTAGLRRKVGQASGHEFYASVRTHSAIDAAEVVIVLIDASAPLTEQDQRVLSMVIEAGRALVLAFNKWDLVDEDRRELLEREIDRELVQLRWAQRVNISAKTGRAVAKLVPAMETALASWDTRIATGPLNSWLKEVVAATPPPVRGGKQPRILFATQAAARPPTFVLFTTGFLEAGYRRFLERRLREAFGFEGTPIRINVRVREKRGARRR.

2 consecutive EngA-type G domains span residues 30–193 (PVVA…PEVS) and 203–376 (RRVA…ASWD). GTP contacts are provided by residues 36–43 (GRPNVGKS), 83–87 (DTGGW), 145–148 (NKVD), 209–216 (GKPNVGKS), 256–260 (DTAGL), and 321–324 (NKWD). In terms of domain architecture, KH-like spans 377-459 (TRIATGPLNS…PIRINVRVRE (83 aa)).

The protein belongs to the TRAFAC class TrmE-Era-EngA-EngB-Septin-like GTPase superfamily. EngA (Der) GTPase family. In terms of assembly, associates with the 50S ribosomal subunit.

Functionally, GTPase that plays an essential role in the late steps of ribosome biogenesis. This is GTPase Der from Mycolicibacterium paratuberculosis (strain ATCC BAA-968 / K-10) (Mycobacterium paratuberculosis).